The primary structure comprises 239 residues: Tetraspanin-9 (239 aa).

Over 1 to 13 (MARGCLCCLKYTM) the chain is Cytoplasmic. Residues 14 to 34 (FLFNLIFWLCGCGLLGVGIWL) form a helical membrane-spanning segment. The Extracellular segment spans residues 35–55 (SVSQGNFATFSPSFPSLSAAN). The chain crosses the membrane as a helical span at residues 56–76 (LVIAIGTIVMVTGFLGCLGAI). The Cytoplasmic segment spans residues 77-85 (KENKCLLLS). Residues 86-106 (FFIVLLIILLAELILIILFFV) traverse the membrane as a helical segment. Topologically, residues 107–203 (YMDKVNENAK…VKLWFDDNKH (97 aa)) are extracellular. The N-linked (GlcNAc...) asparagine glycan is linked to Asn-180. The helical transmembrane segment at 204-224 (VLGTVGMCILIMQILGMAFSM) threads the bilayer. At 225–239 (TLFQHIHRTGKKYDA) the chain is on the cytoplasmic side.

It belongs to the tetraspanin (TM4SF) family. In terms of assembly, found in a complex with GP6. In terms of processing, glycosylated. In terms of tissue distribution, strongly expressed in megakaryocytes, platelets and lung. Weakly expressed in bone marrow, brain and kidney (at protein level).

The protein resides in the membrane. The protein is Tetraspanin-9 (Tspan9) of Mus musculus (Mouse).